Reading from the N-terminus, the 65-residue chain is Large ribosomal subunit protein uL29 (65 aa).

Belongs to the universal ribosomal protein uL29 family.

The sequence is that of Large ribosomal subunit protein uL29 (rpmC) from Xylella fastidiosa (strain 9a5c).